The sequence spans 193 residues: Non-specific lipid transfer protein GPI-anchored 2 (193 aa).

The N-terminal stretch at 1-22 (MSNVVVIAVVLIVASLTGHVSA) is a signal peptide. 4 disulfides stabilise this stretch: C38-C83, C48-C67, C68-C110, and C81-C120. The N-linked (GlcNAc...) asparagine glycan is linked to N44. The disordered stretch occupies residues 143-164 (APGSMSGAESPGGFGSGPSASR). The GPI-anchor amidated glycine moiety is linked to residue G165. The propeptide at 166–193 (SDAPSSAPYSLFLNLIIFPLAFAFYIFC) is removed in mature form.

It belongs to the plant LTP family. O-glycosylated on hydroxyprolines; noncontiguous hydroxylproline residues are glycosylated with arabinogalactan. Up-regulated in the epidermis of top stems. Expressed in roots, cotyledons, seedlings, leaves, stems, buds, flower and silique walls. Preferentially expressed in the shoot apical meristem and the root meristem. Also detected in expanding leaves and petals, developing flowers, and elongating pistils, stamens and siliques.

It localises to the cell membrane. Lipid transfer protein that, together with LTPG1, binds to lipids and functions as a component of the cuticular lipid export machinery that performs extensive export of intracellular lipids (e.g. C29 alkane) from epidermal cells to the surface to build the cuticular wax layer and silique walls. Contributes to pre-invasive defense against some non-host powdery mildew pathogens by preventing the penetration of the epidermal cell wall by the fungal agents (e.g. Blumeria graminis f. sp. hordei (Bgh)). Involved in seed and ovule maturation and development, probably by regulating the fatty acids homeostasis during suberin and sporopollenin biosynthesis or deposition. The sequence is that of Non-specific lipid transfer protein GPI-anchored 2 from Arabidopsis thaliana (Mouse-ear cress).